Consider the following 234-residue polypeptide: NAD-dependent protein deacylase (234 aa).

One can recognise a Deacetylase sirtuin-type domain in the interval 1–234 (MTKQVRIVVL…LVPHYLAQFL (234 aa)). 12-31 (GAGISAESGIRTFRATDGLW) contributes to the NAD(+) binding site. Residues Tyr-56 and Arg-59 each coordinate substrate. 93–96 (QNVD) serves as a coordination point for NAD(+). The active-site Proton acceptor is His-111. Positions 119 and 138 each coordinate Zn(2+). NAD(+) is bound by residues 178–180 (GTS), 204–206 (NLE), and Ala-222.

This sequence belongs to the sirtuin family. Class III subfamily. Zn(2+) serves as cofactor.

The protein resides in the cytoplasm. The catalysed reaction is N(6)-acetyl-L-lysyl-[protein] + NAD(+) + H2O = 2''-O-acetyl-ADP-D-ribose + nicotinamide + L-lysyl-[protein]. It catalyses the reaction N(6)-succinyl-L-lysyl-[protein] + NAD(+) + H2O = 2''-O-succinyl-ADP-D-ribose + nicotinamide + L-lysyl-[protein]. NAD-dependent lysine deacetylase and desuccinylase that specifically removes acetyl and succinyl groups on target proteins. Modulates the activities of several proteins which are inactive in their acylated form. The polypeptide is NAD-dependent protein deacylase (Pasteurella multocida (strain Pm70)).